A 722-amino-acid chain; its full sequence is Polyribonucleotide nucleotidyltransferase (722 aa).

Asp-495 and Asp-501 together coordinate Mg(2+). The KH domain maps to Pro-561–Ile-620. The 71-residue stretch at Gly-630–Lys-700 folds into the S1 motif domain.

It belongs to the polyribonucleotide nucleotidyltransferase family. Requires Mg(2+) as cofactor.

The protein localises to the cytoplasm. The enzyme catalyses RNA(n+1) + phosphate = RNA(n) + a ribonucleoside 5'-diphosphate. Its function is as follows. Involved in mRNA degradation. Catalyzes the phosphorolysis of single-stranded polyribonucleotides processively in the 3'- to 5'-direction. This is Polyribonucleotide nucleotidyltransferase from Chromobacterium violaceum (strain ATCC 12472 / DSM 30191 / JCM 1249 / CCUG 213 / NBRC 12614 / NCIMB 9131 / NCTC 9757 / MK).